The sequence spans 495 residues: F(420)H(2) dehydrogenase subunit M (495 aa).

15 helical membrane passes run 1–21 (MLPVASLLILVPLIFAVVTFF), 27–47 (LAAGFGFLGSLATLGLTLYAY), 57–77 (MQFYESVSWIPFLGVNYSVGI), 80–100 (VSMPLILLNAIVIPFMILFTW), 108–128 (NRFYGLILTMQAAVIGVFVAL), 130–150 (FVVFYIFWELTLVPLFFIVNL), 163–183 (FFIYTHVASLVMLLGIFGLFY), 215–235 (IFLAILFGFLAKLPAFPFHSW), 249–269 (ILFILLKIGGYGLFRISLPML), 277–297 (LMIMILGLLGSVSILYGALLA), 315–335 (MGYVILGSAGLVTLSVSGAMF), 338–358 (FSHGLIMSIMFMSAGAIQTAA), 378–398 (VAMMVGFMASLGLPGLTGFIA), 412–432 (VFVVIALLAIVVTAGYHLWAM), and 450–470 (INSIQVFSMAVIALLVLYFGL).

The protein belongs to the complex I subunit 4 family. The FPO complex is composed of at least 13 different subunits. FpoA, FpoH, FpoJ, FpoK, FpoL, FpoM and FpoN proteins constitute the membrane sector of the complex.

The protein resides in the cell membrane. It carries out the reaction methanophenazine + reduced coenzyme F420-(gamma-L-Glu)(n) = dihydromethanophenazine + oxidized coenzyme F420-(gamma-L-Glu)(n) + H(+). Its function is as follows. Component of the F(420)H(2) dehydrogenase (FPO complex) which is part of the energy-conserving F(420)H(2):heterodisulfide oxidoreductase system. The membrane-bound electron transfer system of the complex plays an important role in the metabolism of methylotrophic methanogens when the organisms grow on methanol or methylamines. Catalyzes the oxidation of methanophenazine to dihydromethanophenazine. It shuttles electrons from F(420)H(2), via FAD and iron-sulfur (Fe-S) centers, to methanophenazine (an electron carrier in the membrane). It couples the redox reaction to proton translocation (for every two electrons transferred, two hydrogen ions are translocated across the cytoplasmic membrane), and thus conserves the redox energy in a proton gradient. It also catalyzes the oxidation of F(420)H(2) with quinones such as 2,3-dimethyl-1,4-naphthoquinone, 2-methyl-1,4-naphthoquinone and tetramethyl-p-benzoquinone. The polypeptide is F(420)H(2) dehydrogenase subunit M (fpoM) (Methanosarcina mazei (strain ATCC BAA-159 / DSM 3647 / Goe1 / Go1 / JCM 11833 / OCM 88) (Methanosarcina frisia)).